Reading from the N-terminus, the 681-residue chain is DNA-directed RNA polymerase subunit beta' (681 aa).

Zn(2+)-binding residues include cysteine 69, cysteine 71, cysteine 87, and cysteine 90. Residues aspartate 489, aspartate 491, and aspartate 493 each coordinate Mg(2+).

It belongs to the RNA polymerase beta' chain family. RpoC1 subfamily. In plastids the minimal PEP RNA polymerase catalytic core is composed of four subunits: alpha, beta, beta', and beta''. When a (nuclear-encoded) sigma factor is associated with the core the holoenzyme is formed, which can initiate transcription. Mg(2+) is required as a cofactor. Zn(2+) serves as cofactor.

It is found in the plastid. The protein resides in the chloroplast. The enzyme catalyses RNA(n) + a ribonucleoside 5'-triphosphate = RNA(n+1) + diphosphate. Its function is as follows. DNA-dependent RNA polymerase catalyzes the transcription of DNA into RNA using the four ribonucleoside triphosphates as substrates. In Solanum bulbocastanum (Wild potato), this protein is DNA-directed RNA polymerase subunit beta'.